The chain runs to 87 residues: Small ribosomal subunit protein bS20 (87 aa).

Basic residues predominate over residues 1 to 11; the sequence is MANIKSAKKRA. A disordered region spans residues 1-27; the sequence is MANIKSAKKRAVQSEKRRQHNASQRSM.

This sequence belongs to the bacterial ribosomal protein bS20 family.

Binds directly to 16S ribosomal RNA. This chain is Small ribosomal subunit protein bS20, found in Haemophilus influenzae (strain PittEE).